Reading from the N-terminus, the 351-residue chain is DNA polymerase IV (351 aa).

One can recognise a UmuC domain in the interval 4-184 (FIHIDMDCFY…LPLGKIPGVG (181 aa)). Mg(2+) contacts are provided by aspartate 8 and aspartate 102. Glutamate 103 is a catalytic residue.

The protein belongs to the DNA polymerase type-Y family. In terms of assembly, monomer. The cofactor is Mg(2+).

The protein localises to the cytoplasm. The catalysed reaction is DNA(n) + a 2'-deoxyribonucleoside 5'-triphosphate = DNA(n+1) + diphosphate. Functionally, poorly processive, error-prone DNA polymerase involved in untargeted mutagenesis. Copies undamaged DNA at stalled replication forks, which arise in vivo from mismatched or misaligned primer ends. These misaligned primers can be extended by PolIV. Exhibits no 3'-5' exonuclease (proofreading) activity. May be involved in translesional synthesis, in conjunction with the beta clamp from PolIII. The polypeptide is DNA polymerase IV (Pseudoalteromonas translucida (strain TAC 125)).